The following is a 179-amino-acid chain: Protein PLASTID REDOX INSENSITIVE 2, chloroplastic (179 aa).

The N-terminal 69 residues, 1–69, are a transit peptide targeting the chloroplast; sequence MASMHEALFS…SLSRRGFVCR (69 aa).

Binds DNA when in complex with CSP41b.

It localises to the plastid. The protein resides in the chloroplast stroma. The protein localises to the chloroplast nucleoid. In terms of biological role, involved in redox-mediated retrograde signaling to synchronize the expression of photosynthetic genes from both the nuclear and plastidic genomes, especially in excess light conditions. Required for full expression of genes transcribed by the plastid-encoded RNA polymerase (PEP). Essential for embryo development. The chain is Protein PLASTID REDOX INSENSITIVE 2, chloroplastic from Arabidopsis thaliana (Mouse-ear cress).